Reading from the N-terminus, the 81-residue chain is Cytochrome b559 subunit alpha (81 aa).

A helical transmembrane segment spans residues valine 21–tryptophan 35. Histidine 23 lines the heme pocket.

The protein belongs to the PsbE/PsbF family. As to quaternary structure, heterodimer of an alpha subunit and a beta subunit. PSII is composed of 1 copy each of membrane proteins PsbA, PsbB, PsbC, PsbD, PsbE, PsbF, PsbH, PsbI, PsbJ, PsbK, PsbL, PsbM, PsbT, PsbX, PsbY, PsbZ, Psb30/Ycf12, at least 3 peripheral proteins of the oxygen-evolving complex and a large number of cofactors. It forms dimeric complexes. The cofactor is heme b.

Its subcellular location is the plastid. It localises to the chloroplast thylakoid membrane. Its function is as follows. This b-type cytochrome is tightly associated with the reaction center of photosystem II (PSII). PSII is a light-driven water:plastoquinone oxidoreductase that uses light energy to abstract electrons from H(2)O, generating O(2) and a proton gradient subsequently used for ATP formation. It consists of a core antenna complex that captures photons, and an electron transfer chain that converts photonic excitation into a charge separation. The protein is Cytochrome b559 subunit alpha of Tetradesmus obliquus (Green alga).